We begin with the raw amino-acid sequence, 61 residues long: Temporin-ALj (61 aa).

The first 22 residues, 1–22 (MFTLKKSLLLLFFLATINLSFC), serve as a signal peptide directing secretion. The propeptide occupies 23–46 (EQERNAEEERRDEPDERNAEVEKR). Leu59 bears the Leucine amide mark.

It belongs to the frog skin active peptide (FSAP) family. Temporin subfamily. Expressed by the skin glands.

It is found in the secreted. Antimicrobial peptide with activity against Gram-positive and Gram-negative bacteria and against fungi. Has been tested against S.aureus (MIC=7.5 ug/mL), B.pumilus (MIC=15.0 ug/mL), B.cereus (MIC=75.0 ug/mL), E.coli (MIC=15.0 ug/mL), B.dysenteriae (MIC=30.0 ug/mL), A.cacoaceticus (MIC=60.0 ug/mL), P.aeruginosa (MIC=7.5 ug/mL) and C.albicans (MIC=5.0 ug/mL). Also shows a weak hemolytic activity. The chain is Temporin-ALj from Amolops loloensis (Lolokou Sucker Frog).